The primary structure comprises 182 residues: A-type ATP synthase subunit E (182 aa).

It belongs to the V-ATPase E subunit family. Has multiple subunits with at least A(3), B(3), C, D, E, F, H, I and proteolipid K(x).

The protein localises to the cell membrane. Its function is as follows. Component of the A-type ATP synthase that produces ATP from ADP in the presence of a proton gradient across the membrane. This Picrophilus torridus (strain ATCC 700027 / DSM 9790 / JCM 10055 / NBRC 100828 / KAW 2/3) protein is A-type ATP synthase subunit E.